A 164-amino-acid chain; its full sequence is MQKQHQRQHKVELVANLKSQFVDAKALLICDYKGLSVKKLEALRNKARNQGIKVQVIKNTLAHIAMKEAGYSDLDLKETNVFLWGGDQIALSKLVFDFQKEHKDHFVLKAGLFDKESVSVAHVEAVSKLPSKEELMGMLLSVWTAPARYFVTGLDNLRKAKEEN.

This sequence belongs to the universal ribosomal protein uL10 family. In terms of assembly, part of the ribosomal stalk of the 50S ribosomal subunit. The N-terminus interacts with L11 and the large rRNA to form the base of the stalk. The C-terminus forms an elongated spine to which L12 dimers bind in a sequential fashion forming a multimeric L10(L12)X complex.

Forms part of the ribosomal stalk, playing a central role in the interaction of the ribosome with GTP-bound translation factors. This chain is Large ribosomal subunit protein uL10, found in Helicobacter pylori (strain G27).